The chain runs to 261 residues: Triosephosphate isomerase (261 aa).

10–12 (NWK) is a binding site for substrate. His-100 (electrophile) is an active-site residue. Catalysis depends on Glu-172, which acts as the Proton acceptor. Residues Gly-178, Ser-218, and 239–240 (GG) each bind substrate.

It belongs to the triosephosphate isomerase family. As to quaternary structure, homodimer.

It localises to the cytoplasm. It carries out the reaction D-glyceraldehyde 3-phosphate = dihydroxyacetone phosphate. The protein operates within carbohydrate biosynthesis; gluconeogenesis. It participates in carbohydrate degradation; glycolysis; D-glyceraldehyde 3-phosphate from glycerone phosphate: step 1/1. Its function is as follows. Involved in the gluconeogenesis. Catalyzes stereospecifically the conversion of dihydroxyacetone phosphate (DHAP) to D-glyceraldehyde-3-phosphate (G3P). This chain is Triosephosphate isomerase, found in Mycobacterium marinum (strain ATCC BAA-535 / M).